Consider the following 65-residue polypeptide: Alpha-like toxin Bom4 (65 aa).

Positions 2–64 (RDAYIAQPEN…VPIRIPGKCH (63 aa)) constitute an LCN-type CS-alpha/beta domain. 4 disulfides stabilise this stretch: Cys12-Cys63, Cys16-Cys36, Cys22-Cys46, and Cys26-Cys48.

Belongs to the long (4 C-C) scorpion toxin superfamily. Sodium channel inhibitor family. Alpha subfamily. Expressed by the venom gland.

It localises to the secreted. Its function is as follows. Alpha toxins bind voltage-independently at site-3 of sodium channels (Nav) and inhibit the inactivation of the activated channels, thereby blocking neuronal transmission. This alpha-like toxin is highly toxic to mice and insects. In Buthus occitanus mardochei (Moroccan scorpion), this protein is Alpha-like toxin Bom4.